The chain runs to 326 residues: Polycomb complex protein BMI-1 (326 aa).

The segment at 18-57 (CVLCGGYFIDATTIIECLHSFCKTCIVRYLETSKYCPICD) adopts an RING-type zinc-finger fold. The short motif at 81-95 (KLVPGLFKNEMKRRR) is the Nuclear localization signal element. Residues 162–182 (RYLRCPAAMTVMHLRKFLRSK) are interaction with PHC2. An interaction with E4F1 region spans residues 164 to 228 (LRCPAAMTVM…GPLPLKYRVR (65 aa)). Residues 236 to 326 (IGHQREGLSN…INGSSATSSG (91 aa)) form a disordered region. Low complexity predominate over residues 265–278 (LPSTSSCLPSPSTP). The segment covering 279 to 310 (VQSPHPQFPHISSTMNGTSSSPGSNHQSSFTN) has biased composition (polar residues). Residues 315 to 326 (SSINGSSATSSG) are compositionally biased toward low complexity.

In terms of assembly, component of a PRC1-like complex.

Its subcellular location is the nucleus. It localises to the cytoplasm. Functionally, component of a Polycomb group (PcG) multiprotein PRC1-like complex, a complex class required to maintain the transcriptionally repressive state of many genes, including Hox genes, throughout development. PcG PRC1 complex acts via chromatin remodeling and modification of histones; it mediates monoubiquitination of histone H2A 'Lys-119', rendering chromatin heritably changed in its expressibility. In the PRC1-like complex, regulates the E3 ubiquitin-protein ligase activity of RNF2/RING2. The chain is Polycomb complex protein BMI-1 (BMI1) from Gallus gallus (Chicken).